Here is a 149-residue protein sequence, read N- to C-terminus: GATA transcription factor 15 (149 aa).

The span at 1–10 (MLDPTEKVID) shows a compositional bias: basic and acidic residues. Disordered stretches follow at residues 1 to 41 (MLDP…NEKK) and 76 to 102 (RRTLISNRSEDKKKKSHNRNPKFGDSL). The segment at 37–91 (SNEKKSCAICGTSKTPLWRGGPAGPKSLCNACGIRNRKKRRTLISNRSEDKKKKS) adopts a GATA-type zinc-finger fold.

This sequence belongs to the type IV zinc-finger family. Class B subfamily.

The protein resides in the nucleus. Functionally, transcriptional regulator that specifically binds 5'-GATA-3' or 5'-GAT-3' motifs within gene promoters. This Arabidopsis thaliana (Mouse-ear cress) protein is GATA transcription factor 15 (GATA15).